Reading from the N-terminus, the 630-residue chain is Terpinolene synthase, chloroplastic (630 aa).

The transit peptide at 1-52 directs the protein to the chloroplast; sequence MALVSILPLSSKSVLHKSWIVSTYEHKAISRTIPNLGLRGRGKSVTHSLRMS. 4 residues coordinate Mg(2+): D381, D385, N525, and D533. A DDXXD motif motif is present at residues 381 to 385; sequence DDIYD.

The protein belongs to the terpene synthase family. Tpsd subfamily. Requires Mg(2+) as cofactor. Mn(2+) is required as a cofactor. It depends on K(+) as a cofactor.

It is found in the plastid. It localises to the chloroplast. The enzyme catalyses (2E)-geranyl diphosphate = terpinolene + diphosphate. Its pathway is terpene metabolism; oleoresin biosynthesis. Its function is as follows. Involved in defensive oleoresin formation in conifers in response to insect attack or other injury. Involved in monoterpene (C10) olefins biosynthesis. The protein is Terpinolene synthase, chloroplastic (ag9) of Abies grandis (Grand fir).